Here is a 70-residue protein sequence, read N- to C-terminus: ATP synthase subunit epsilon, mitochondrial (70 aa).

Belongs to the eukaryotic ATPase epsilon family. As to quaternary structure, F-type ATPases have 2 components, CF(1) - the catalytic core - and CF(0) - the membrane proton channel. CF(1) has five subunits: alpha(3), beta(3), gamma(1), delta(1), epsilon(1). CF(0) has three main subunits: a, b and c.

The protein localises to the mitochondrion. The protein resides in the mitochondrion inner membrane. Mitochondrial membrane ATP synthase (F(1)F(0) ATP synthase or Complex V) produces ATP from ADP in the presence of a proton gradient across the membrane which is generated by electron transport complexes of the respiratory chain. F-type ATPases consist of two structural domains, F(1) - containing the extramembraneous catalytic core, and F(0) - containing the membrane proton channel, linked together by a central stalk and a peripheral stalk. During catalysis, ATP synthesis in the catalytic domain of F(1) is coupled via a rotary mechanism of the central stalk subunits to proton translocation. Part of the complex F(1) domain and of the central stalk which is part of the complex rotary element. Rotation of the central stalk against the surrounding alpha(3)beta(3) subunits leads to hydrolysis of ATP in three separate catalytic sites on the beta subunits. The chain is ATP synthase subunit epsilon, mitochondrial from Ipomoea batatas (Sweet potato).